The sequence spans 227 residues: Triosephosphate isomerase (227 aa).

9-11 (NFK) is a substrate binding site. The active-site Electrophile is H93. The Proton acceptor role is filled by E141. Residues I146, G180, and 201–202 (AS) each bind substrate.

This sequence belongs to the triosephosphate isomerase family. In terms of assembly, homotetramer; dimer of dimers.

The protein resides in the cytoplasm. The catalysed reaction is D-glyceraldehyde 3-phosphate = dihydroxyacetone phosphate. Its pathway is carbohydrate biosynthesis; gluconeogenesis. The protein operates within carbohydrate degradation; glycolysis; D-glyceraldehyde 3-phosphate from glycerone phosphate: step 1/1. Involved in the gluconeogenesis. Catalyzes stereospecifically the conversion of dihydroxyacetone phosphate (DHAP) to D-glyceraldehyde-3-phosphate (G3P). The sequence is that of Triosephosphate isomerase from Saccharolobus solfataricus (strain ATCC 35092 / DSM 1617 / JCM 11322 / P2) (Sulfolobus solfataricus).